A 1129-amino-acid polypeptide reads, in one-letter code: Serine/threonine-protein kinase 11-interacting protein (1129 aa).

LRR repeat units lie at residues 107 to 128 (SLRSLELRCLPPHCLRGLRSVY), 130 to 150 (QLEVLTCYRCVSSLEEVIALC), 162 to 183 (VLHTLDFSYNTLKNLDGSLELL), 185 to 206 (SLKILDLSHNQITECGSYLKVL), 208 to 229 (ELQYLNLGYNHLTAVPELSVGN), 232 to 253 (KLHSLILKHNQLSGTSGLENLP), 254 to 275 (NLQHLDLSYNLLLEHSQLSGLA), and 279 to 300 (NLKQLFLEGNPLYFQKDYRALT). Disordered stretches follow at residues 335–392 (RLQP…RRGQ), 428–475 (DPEY…HVAP), 654–678 (GDIYSPESLQQGKEPTAGLHRNHTG), and 696–724 (NPTGETSTPLRPLSAEPPQGDDGGGGLAA). Over residues 337–355 (QPSSSATESSCTGDLTDSY) the composition is skewed to polar residues. Residues 365-374 (LPRKKSRVKV) are compositionally biased toward basic residues. Basic and acidic residues predominate over residues 381–391 (ERSDSEYERRG). A compositionally biased stretch (pro residues) spans 436 to 447 (HSPPPRASPSPT). Low complexity predominate over residues 448 to 458 (APSSVPKQKSP).

This sequence belongs to the STK11IP family.

The protein localises to the cytoplasm. The polypeptide is Serine/threonine-protein kinase 11-interacting protein (stk11ip) (Xenopus tropicalis (Western clawed frog)).